Reading from the N-terminus, the 288-residue chain is MKGSEFQSKWRAYCRLMRIDKPIGSLLLLWPTLWALWLAGKGIPDTKILIVFVLGVFFMRAAGCVVNDYADRRIDGFVKRTASRPLPSGLISERESKILFVVLVLLSFGLVLTLNSMTIWLSLAALALAWVYPFMKRVTHLPQVVLGAAFGWSIPMGFAAVSENLPLVCWLLLLANICWTVAYDTQYAMVDRDDDLKIGVKSTAILFGQQDKLIIGLLQLATLVLMVTIGWLMNLGGAFYWSILLAGALFVHQQKMIAGRERDPCFRAFLNNNYVGLVLFLGIFISYL.

A run of 8 helical transmembrane segments spans residues 23–43 (IGSL…GKGI), 46–66 (TKIL…GCVV), 98–118 (ILFV…NSMT), 141–161 (LPQV…FAAV), 165–185 (LPLV…AYDT), 213–233 (LIIG…GWLM), 234–254 (NLGG…VHQQ), and 268–288 (AFLN…ISYL).

Belongs to the UbiA prenyltransferase family. It depends on Mg(2+) as a cofactor.

Its subcellular location is the cell inner membrane. It carries out the reaction all-trans-octaprenyl diphosphate + 4-hydroxybenzoate = 4-hydroxy-3-(all-trans-octaprenyl)benzoate + diphosphate. It functions in the pathway cofactor biosynthesis; ubiquinone biosynthesis. Catalyzes the prenylation of para-hydroxybenzoate (PHB) with an all-trans polyprenyl group. Mediates the second step in the final reaction sequence of ubiquinone-8 (UQ-8) biosynthesis, which is the condensation of the polyisoprenoid side chain with PHB, generating the first membrane-bound Q intermediate 3-octaprenyl-4-hydroxybenzoate. The protein is 4-hydroxybenzoate octaprenyltransferase of Yersinia enterocolitica serotype O:8 / biotype 1B (strain NCTC 13174 / 8081).